Reading from the N-terminus, the 582-residue chain is DNA repair and recombination protein radC (582 aa).

A DNA-binding region spans residues 146-150 (KRALR). The span at 194–204 (KKEPMRVKPSL) shows a compositional bias: basic and acidic residues. 3 disordered regions span residues 194-226 (KKEP…NSAA), 310-400 (QIPN…INGQ), and 485-582 (APSG…QHQH). A compositionally biased stretch (polar residues) spans 326–335 (QNQYTNQRQS). Over residues 516–529 (AAAQNNTAAANRMA) the composition is skewed to low complexity.

It belongs to the RAD52 family. As to quaternary structure, part of a complex that includes RAD51, RAD52 and RAD59.

Its subcellular location is the nucleus. Functionally, involved in DNA double-strand break (DSB) repair and recombination. Promotes the annealing of complementary single-stranded DNA and by stimulation of the RAD51 recombinase. The chain is DNA repair and recombination protein radC (radC) from Emericella nidulans (strain FGSC A4 / ATCC 38163 / CBS 112.46 / NRRL 194 / M139) (Aspergillus nidulans).